The following is a 712-amino-acid chain: Polyribonucleotide nucleotidyltransferase (712 aa).

D487 and D493 together coordinate Mg(2+). Residues 554–613 (PRIEVMNIPVDKIREVIGSGGKVIREIVEKTGAKINIEDDGTVKIASSSGKEIEAARKWI) enclose the KH domain. Residues 623 to 691 (GQIYEGTVVK…ERGKVRLSMK (69 aa)) enclose the S1 motif domain.

This sequence belongs to the polyribonucleotide nucleotidyltransferase family. Mg(2+) is required as a cofactor.

It localises to the cytoplasm. The enzyme catalyses RNA(n+1) + phosphate = RNA(n) + a ribonucleoside 5'-diphosphate. In terms of biological role, involved in mRNA degradation. Catalyzes the phosphorolysis of single-stranded polyribonucleotides processively in the 3'- to 5'-direction. In Rhizobium etli (strain ATCC 51251 / DSM 11541 / JCM 21823 / NBRC 15573 / CFN 42), this protein is Polyribonucleotide nucleotidyltransferase.